The primary structure comprises 456 residues: Probable serine/threonine-protein kinase DDB_G0277449 (456 aa).

Over residues 50 to 83 (STSPTECEESSSSTITTPSEESLSSGEESSSISD) the composition is skewed to low complexity. Residues 50 to 84 (STSPTECEESSSSTITTPSEESLSSGEESSSISDS) form a disordered region. In terms of domain architecture, Protein kinase spans 128-383 (FIIKHLVGKG…AIEIKRHPFF (256 aa)). ATP-binding positions include 134-142 (VGKGGFGKV) and K157. The active-site Proton acceptor is D251. The region spanning 384 to 455 (KSIQWRKIEN…VRTPVLLESQ (72 aa)) is the AGC-kinase C-terminal domain.

Belongs to the protein kinase superfamily. AGC Ser/Thr protein kinase family.

The enzyme catalyses L-seryl-[protein] + ATP = O-phospho-L-seryl-[protein] + ADP + H(+). It carries out the reaction L-threonyl-[protein] + ATP = O-phospho-L-threonyl-[protein] + ADP + H(+). The sequence is that of Probable serine/threonine-protein kinase DDB_G0277449 from Dictyostelium discoideum (Social amoeba).